The primary structure comprises 358 residues: Uroporphyrinogen decarboxylase (358 aa).

Residues 29 to 33, aspartate 79, tyrosine 155, serine 210, and histidine 330 each bind substrate; that span reads RQAGR.

Belongs to the uroporphyrinogen decarboxylase family. In terms of assembly, homodimer.

Its subcellular location is the cytoplasm. The enzyme catalyses uroporphyrinogen III + 4 H(+) = coproporphyrinogen III + 4 CO2. The protein operates within porphyrin-containing compound metabolism; protoporphyrin-IX biosynthesis; coproporphyrinogen-III from 5-aminolevulinate: step 4/4. Its function is as follows. Catalyzes the decarboxylation of four acetate groups of uroporphyrinogen-III to yield coproporphyrinogen-III. This chain is Uroporphyrinogen decarboxylase, found in Bordetella petrii (strain ATCC BAA-461 / DSM 12804 / CCUG 43448).